A 361-amino-acid polypeptide reads, in one-letter code: RNA 3'-terminal phosphate cyclase (361 aa).

Residues glutamine 109 and 293-297 contribute to the ATP site; that span reads HLADQ. Histidine 319 serves as the catalytic Tele-AMP-histidine intermediate.

This sequence belongs to the RNA 3'-terminal cyclase family. Type 1 subfamily.

It is found in the cytoplasm. It catalyses the reaction a 3'-end 3'-phospho-ribonucleotide-RNA + ATP = a 3'-end 2',3'-cyclophospho-ribonucleotide-RNA + AMP + diphosphate. Functionally, catalyzes the conversion of 3'-phosphate to a 2',3'-cyclic phosphodiester at the end of RNA. The mechanism of action of the enzyme occurs in 3 steps: (A) adenylation of the enzyme by ATP; (B) transfer of adenylate to an RNA-N3'P to produce RNA-N3'PP5'A; (C) and attack of the adjacent 2'-hydroxyl on the 3'-phosphorus in the diester linkage to produce the cyclic end product. The biological role of this enzyme is unknown but it is likely to function in some aspects of cellular RNA processing. This Methylococcus capsulatus (strain ATCC 33009 / NCIMB 11132 / Bath) protein is RNA 3'-terminal phosphate cyclase.